The primary structure comprises 98 residues: MVLIKLNIIMAFMLALTGVLIYRSHLMSTLLCLEGMMLSLFIFMAAVITHFHMFSISMMPLILLVFSACEAGVGLALLVTISNTYGNDQVQNLNLLQW.

The next 3 helical transmembrane spans lie at 1–21 (MVLI…GVLI), 36–56 (MMLS…MFSI), and 61–81 (LILL…LVTI).

The protein belongs to the complex I subunit 4L family. Core subunit of respiratory chain NADH dehydrogenase (Complex I) which is composed of 45 different subunits.

The protein localises to the mitochondrion inner membrane. It carries out the reaction a ubiquinone + NADH + 5 H(+)(in) = a ubiquinol + NAD(+) + 4 H(+)(out). Its function is as follows. Core subunit of the mitochondrial membrane respiratory chain NADH dehydrogenase (Complex I) which catalyzes electron transfer from NADH through the respiratory chain, using ubiquinone as an electron acceptor. Part of the enzyme membrane arm which is embedded in the lipid bilayer and involved in proton translocation. The polypeptide is NADH-ubiquinone oxidoreductase chain 4L (MT-ND4L) (Metachirus nudicaudatus (Brown four-eyed opossum)).